A 439-amino-acid polypeptide reads, in one-letter code: Glucose-1-phosphate adenylyltransferase (439 aa).

Alpha-D-glucose 1-phosphate is bound by residues Tyr-116, Gly-182, 197–198, and Ser-215; that span reads EK.

It belongs to the bacterial/plant glucose-1-phosphate adenylyltransferase family. Homotetramer.

It catalyses the reaction alpha-D-glucose 1-phosphate + ATP + H(+) = ADP-alpha-D-glucose + diphosphate. It participates in glycan biosynthesis; glycogen biosynthesis. Functionally, involved in the biosynthesis of ADP-glucose, a building block required for the elongation reactions to produce glycogen. Catalyzes the reaction between ATP and alpha-D-glucose 1-phosphate (G1P) to produce pyrophosphate and ADP-Glc. This Pasteurella multocida (strain Pm70) protein is Glucose-1-phosphate adenylyltransferase.